A 475-amino-acid chain; its full sequence is Glutamate--tRNA ligase (475 aa).

The 'HIGH' region motif lies at 8–18; the sequence is PSPTGTLHIGT. The short motif at 247–251 is the 'KMSKS' region element; sequence KLSKR. Lys250 contributes to the ATP binding site.

This sequence belongs to the class-I aminoacyl-tRNA synthetase family. Glutamate--tRNA ligase type 1 subfamily. In terms of assembly, monomer.

Its subcellular location is the cytoplasm. The catalysed reaction is tRNA(Glu) + L-glutamate + ATP = L-glutamyl-tRNA(Glu) + AMP + diphosphate. In terms of biological role, catalyzes the attachment of glutamate to tRNA(Glu) in a two-step reaction: glutamate is first activated by ATP to form Glu-AMP and then transferred to the acceptor end of tRNA(Glu). This is Glutamate--tRNA ligase from Synechococcus sp. (strain RCC307).